A 1084-amino-acid polypeptide reads, in one-letter code: Siderophore biosynthesis regulatory protein URBS1 (1084 aa).

Disordered regions lie at residues Met1–Ser164, Ala245–Tyr283, and Arg300–Arg337. Over residues Gln23–Ala51 the composition is skewed to low complexity. Composition is skewed to polar residues over residues Ser97–Thr106 and Arg128–Gln141. Positions Pro150–Ser164 are enriched in low complexity. Basic and acidic residues predominate over residues Ala245–Arg260. The GATA-type 1 zinc-finger motif lies at Cys338–Cys362. Disordered regions lie at residues His372–Asp405 and Val442–Asp472. Residues Arg373–Ser385 are compositionally biased toward polar residues. Residues Cys482 to Cys506 form a GATA-type 2 zinc finger. Disordered stretches follow at residues Ile559 to Ala595, Arg643 to Asp679, Thr692 to Ser803, Glu841 to Asn940, Ala953 to Trp1019, and Ala1040 to Thr1084. 2 stretches are compositionally biased toward basic and acidic residues: residues Arg650–Ser659 and Arg715–Ser725. Basic residues predominate over residues Pro752–Pro781. The segment covering Arg875–Ala888 has biased composition (basic and acidic residues). The segment covering Ser961 to Ala970 has biased composition (polar residues). Residues Pro1070–Thr1084 are compositionally biased toward low complexity.

It localises to the nucleus. Functionally, involved in the regulation of secreted ferrichrome-type siderophores. Acts directly or indirectly to repress the biosynthesis of siderophores. This chain is Siderophore biosynthesis regulatory protein URBS1 (URBS1), found in Mycosarcoma maydis (Corn smut fungus).